The primary structure comprises 168 residues: GTP-dependent dephospho-CoA kinase (168 aa).

6 residues coordinate GTP: Asp49, Val50, Val51, Asp68, Lys70, and Glu120.

It belongs to the GTP-dependent DPCK family.

It carries out the reaction 3'-dephospho-CoA + GTP = GDP + CoA + H(+). It participates in cofactor biosynthesis; coenzyme A biosynthesis. Functionally, catalyzes the GTP-dependent phosphorylation of the 3'-hydroxyl group of dephosphocoenzyme A to form coenzyme A (CoA). This Pyrobaculum neutrophilum (strain DSM 2338 / JCM 9278 / NBRC 100436 / V24Sta) (Thermoproteus neutrophilus) protein is GTP-dependent dephospho-CoA kinase.